Consider the following 179-residue polypeptide: MTRLQEKYQKEVVPAMIEKFGYKNIMEVPKLEKIVINMGVGEAKENQKVLESAVNDLTLIAGQKPVLTRAKKSVANFKIRENMPLGCKVTLRKANMFEFADKLMSIALPRVRDFRGVSSKAFDGRGNYSLGIKEQLIFPEIEYDKIDKVRGMDIIFVTTANTDEEARELLRFLGMPFAQ.

This sequence belongs to the universal ribosomal protein uL5 family. As to quaternary structure, part of the 50S ribosomal subunit; part of the 5S rRNA/L5/L18/L25 subcomplex. Contacts the 5S rRNA and the P site tRNA. Forms a bridge to the 30S subunit in the 70S ribosome.

In terms of biological role, this is one of the proteins that bind and probably mediate the attachment of the 5S RNA into the large ribosomal subunit, where it forms part of the central protuberance. In the 70S ribosome it contacts protein S13 of the 30S subunit (bridge B1b), connecting the 2 subunits; this bridge is implicated in subunit movement. Contacts the P site tRNA; the 5S rRNA and some of its associated proteins might help stabilize positioning of ribosome-bound tRNAs. In Clostridium beijerinckii (strain ATCC 51743 / NCIMB 8052) (Clostridium acetobutylicum), this protein is Large ribosomal subunit protein uL5.